The sequence spans 253 residues: Complement C1q subcomponent subunit B (253 aa).

An N-terminal signal peptide occupies residues 1-27 (MMMKIPWGSIPVLMLLLLLGLIDISQA). Gln28 is subject to Pyrrolidone carboxylic acid. Pro35, Pro38, Pro41, Pro53, and Pro56 each carry 4-hydroxyproline. Collagen-like domains follow at residues 37–86 (IPGI…PGNP) and 60–114 (GEKG…GESG). The interval 38–115 (PGIPGIPGTP…APGPKGESGD (78 aa)) is disordered. Residues Lys59 and Lys62 each carry the 5-hydroxylysine modification. Pro65 carries the 4-hydroxyproline modification. Residues 70–79 (DHGEFGEKGD) are compositionally biased toward basic and acidic residues. Lys77 bears the 5-hydroxylysine mark. Positions 80–92 (PGIPGNPGKVGPK) are enriched in low complexity. 4-hydroxyproline is present on residues Pro83 and Pro86. A 5-hydroxylysine mark is found at Lys92 and Lys98. Residues 96–105 (GPKGGPGAPG) are compositionally biased toward gly residues. 4-hydroxyproline occurs at positions 101, 104, and 107. Lys110 carries the post-translational modification 5-hydroxylysine. The C1q domain maps to 117 to 253 (KATQKIAFSA…GFLLFPDMEA (137 aa)). Cys181 and Cys198 are joined by a disulfide. 3 residues coordinate Ca(2+): Asp199, Tyr200, and Gln206.

In terms of assembly, core component of the complement C1 complex, a calcium-dependent complex composed of 1 molecule of the C1Q subcomplex, 2 molecules of C1R and 2 molecules of C1S. The C1Q subcomplex is composed 18 subunits: 3 chains of C1QA, C1QB, and C1QC trimerize to form 6 collagen-like triple helices connected to six globular ligand-recognition modules (C1q domain). Hydroxylated on lysine and proline residues. Hydroxylated lysine residues can be glycosylated. Human C1Q contains up to 68.3 hydroxylysine-galactosylglucose residues and up to 2.5 hydroxylysine-galactose per molecule. Total percentage hydroxylysine residues glycosylated is 86.4%.

The protein resides in the secreted. Its subcellular location is the cell surface. The C1Q subcomplex is inhibited by sulfated molecules, such as triterpenoid sulfates, heparan sulfate, or chondroitin sulfates. Core component of the complement C1 complex, a multiprotein complex that initiates the classical pathway of the complement system, a cascade of proteins that leads to phagocytosis and breakdown of pathogens and signaling that strengthens the adaptive immune system. The classical complement pathway is initiated by the C1Q subcomplex of the C1 complex, which specifically binds IgG or IgM immunoglobulins complexed with antigens, forming antigen-antibody complexes on the surface of pathogens: C1QA, together with C1QB and C1QC, specifically recognizes and binds the Fc regions of IgG or IgM via its C1q domain. Immunoglobulin-binding activates the proenzyme C1R, which cleaves C1S, initiating the proteolytic cascade of the complement system. The C1Q subcomplex is activated by a hexamer of IgG complexed with antigens, while it is activated by a pentameric IgM. The C1Q subcomplex also recognizes and binds phosphatidylserine exposed on the surface of cells undergoing programmed cell death, possibly promoting activation of the complement system. The polypeptide is Complement C1q subcomponent subunit B (Homo sapiens (Human)).